The chain runs to 156 residues: ATP synthase subunit b 2 (156 aa).

A helical membrane pass occupies residues 7 to 29 (LLGQAISFAIFVWFCMKYVWPPV).

Belongs to the ATPase B chain family. As to quaternary structure, F-type ATPases have 2 components, F(1) - the catalytic core - and F(0) - the membrane proton channel. F(1) has five subunits: alpha(3), beta(3), gamma(1), delta(1), epsilon(1). F(0) has three main subunits: a(1), b(2) and c(10-14). The alpha and beta chains form an alternating ring which encloses part of the gamma chain. F(1) is attached to F(0) by a central stalk formed by the gamma and epsilon chains, while a peripheral stalk is formed by the delta and b chains.

The protein resides in the cell inner membrane. F(1)F(0) ATP synthase produces ATP from ADP in the presence of a proton or sodium gradient. F-type ATPases consist of two structural domains, F(1) containing the extramembraneous catalytic core and F(0) containing the membrane proton channel, linked together by a central stalk and a peripheral stalk. During catalysis, ATP synthesis in the catalytic domain of F(1) is coupled via a rotary mechanism of the central stalk subunits to proton translocation. Its function is as follows. Component of the F(0) channel, it forms part of the peripheral stalk, linking F(1) to F(0). The polypeptide is ATP synthase subunit b 2 (Marinomonas sp. (strain MWYL1)).